Consider the following 359-residue polypeptide: MIRHTINLKERSYPICIATDFQELGKTVLSFRQGNKALLITDENVDNYYSDECMKVLQVSGIEVNKHVLKPGESNKTLEAVYGIYNKMVECKLDRSSIVLALGGGVVGDIAGFAAATYMRGINFVQIPTTLLAQADSSVGGKTGVDFNGHKNIVGAFYQPKAVFINVNTIKTLPKREISAGLAEVIKHGLIMDEEYCDYINYNADKIFKFDENVLQYLAKKNCSIKGYVVEQDEKEDDLRAILNFGHTIGHAIETVENFRLLHGECVSIGIVGVYKIAQYMEVLSEQLVNQVKEILLKLGLPVSLPGLDVERVYNQIFYDKKVKDNKLKFVLPRRIGEVFQCTIKDNELIKKVLLDLSN.

NAD(+)-binding positions include 105–109, 129–130, lysine 142, lysine 151, and 169–172; these read GVVGD, TT, and TIKT. Positions 184, 247, and 263 each coordinate Zn(2+).

Belongs to the sugar phosphate cyclases superfamily. Dehydroquinate synthase family. Co(2+) serves as cofactor. It depends on Zn(2+) as a cofactor. Requires NAD(+) as cofactor.

The protein localises to the cytoplasm. The catalysed reaction is 7-phospho-2-dehydro-3-deoxy-D-arabino-heptonate = 3-dehydroquinate + phosphate. It participates in metabolic intermediate biosynthesis; chorismate biosynthesis; chorismate from D-erythrose 4-phosphate and phosphoenolpyruvate: step 2/7. Catalyzes the conversion of 3-deoxy-D-arabino-heptulosonate 7-phosphate (DAHP) to dehydroquinate (DHQ). This chain is 3-dehydroquinate synthase, found in Ruminiclostridium cellulolyticum (strain ATCC 35319 / DSM 5812 / JCM 6584 / H10) (Clostridium cellulolyticum).